Consider the following 323-residue polypeptide: Lipoyl synthase (323 aa).

Positions 61, 66, 72, 87, 91, 94, and 300 each coordinate [4Fe-4S] cluster. One can recognise a Radical SAM core domain in the interval 73 to 289 (WDKKHATFMI…ETVAYSKGFL (217 aa)).

This sequence belongs to the radical SAM superfamily. Lipoyl synthase family. [4Fe-4S] cluster is required as a cofactor.

It localises to the cytoplasm. It carries out the reaction [[Fe-S] cluster scaffold protein carrying a second [4Fe-4S](2+) cluster] + N(6)-octanoyl-L-lysyl-[protein] + 2 oxidized [2Fe-2S]-[ferredoxin] + 2 S-adenosyl-L-methionine + 4 H(+) = [[Fe-S] cluster scaffold protein] + N(6)-[(R)-dihydrolipoyl]-L-lysyl-[protein] + 4 Fe(3+) + 2 hydrogen sulfide + 2 5'-deoxyadenosine + 2 L-methionine + 2 reduced [2Fe-2S]-[ferredoxin]. Its pathway is protein modification; protein lipoylation via endogenous pathway; protein N(6)-(lipoyl)lysine from octanoyl-[acyl-carrier-protein]: step 2/2. Its function is as follows. Catalyzes the radical-mediated insertion of two sulfur atoms into the C-6 and C-8 positions of the octanoyl moiety bound to the lipoyl domains of lipoate-dependent enzymes, thereby converting the octanoylated domains into lipoylated derivatives. The chain is Lipoyl synthase from Rhizobium leguminosarum bv. trifolii (strain WSM2304).